The sequence spans 503 residues: UDP-N-acetylmuramoylalanine--D-glutamate ligase (503 aa).

ATP is bound at residue 129–135; that stretch reads GTNGKTT.

It belongs to the MurCDEF family.

Its subcellular location is the cytoplasm. The enzyme catalyses UDP-N-acetyl-alpha-D-muramoyl-L-alanine + D-glutamate + ATP = UDP-N-acetyl-alpha-D-muramoyl-L-alanyl-D-glutamate + ADP + phosphate + H(+). It functions in the pathway cell wall biogenesis; peptidoglycan biosynthesis. Its function is as follows. Cell wall formation. Catalyzes the addition of glutamate to the nucleotide precursor UDP-N-acetylmuramoyl-L-alanine (UMA). This Burkholderia cenocepacia (strain HI2424) protein is UDP-N-acetylmuramoylalanine--D-glutamate ligase.